A 214-amino-acid chain; its full sequence is Probable transaldolase (214 aa).

The Schiff-base intermediate with substrate role is filled by K83.

Belongs to the transaldolase family. Type 3B subfamily.

The protein resides in the cytoplasm. It catalyses the reaction D-sedoheptulose 7-phosphate + D-glyceraldehyde 3-phosphate = D-erythrose 4-phosphate + beta-D-fructose 6-phosphate. It functions in the pathway carbohydrate degradation; pentose phosphate pathway; D-glyceraldehyde 3-phosphate and beta-D-fructose 6-phosphate from D-ribose 5-phosphate and D-xylulose 5-phosphate (non-oxidative stage): step 2/3. Its function is as follows. Transaldolase is important for the balance of metabolites in the pentose-phosphate pathway. The sequence is that of Probable transaldolase from Streptococcus equi subsp. zooepidemicus (strain MGCS10565).